A 160-amino-acid chain; its full sequence is Non-secretory ribonuclease (160 aa).

Positions 1 to 27 (MVPKLFTSQICLLLLLGLMGVEGSLHA) are cleaved as a signal peptide. Residue Trp-34 is glycosylated (C-linked (Man) tryptophan). His-42 functions as the Proton acceptor in the catalytic mechanism. N-linked (GlcNAc...) asparagine glycosylation is present at Asn-44. Disulfide bonds link Cys-50-Cys-110, Cys-64-Cys-122, Cys-82-Cys-137, and Cys-89-Cys-98. 3'-nitrotyrosine is present on Tyr-60. Residue 65–69 (KNQNT) coordinates substrate. N-linked (GlcNAc...) asparagine glycans are attached at residues Asn-92, Asn-111, and Asn-138. Catalysis depends on His-155, which acts as the Proton donor.

The protein belongs to the pancreatic ribonuclease family. As to quaternary structure, interacts with and forms a tight 1:1 complex with RNH1. Dimerization of two such complexes may occur.

The protein resides in the lysosome. Its subcellular location is the cytoplasmic granule. The enzyme catalyses an [RNA] containing cytidine + H2O = an [RNA]-3'-cytidine-3'-phosphate + a 5'-hydroxy-ribonucleotide-3'-[RNA].. It carries out the reaction an [RNA] containing uridine + H2O = an [RNA]-3'-uridine-3'-phosphate + a 5'-hydroxy-ribonucleotide-3'-[RNA].. In terms of biological role, this is a non-secretory ribonuclease. It is a pyrimidine specific nuclease with a slight preference for U. Cytotoxin and helminthotoxin. Possesses a wide variety of biological activities. The chain is Non-secretory ribonuclease (RNASE2) from Macaca fascicularis (Crab-eating macaque).